A 235-amino-acid polypeptide reads, in one-letter code: Uridylate kinase (235 aa).

Residue 10-11 (GS) participates in ATP binding. Residue G45 coordinates UMP. Residues G46 and R50 each contribute to the ATP site. UMP is bound by residues D67 and 115–121 (VTPGQTT). Residues T141, Y147, and D150 each coordinate ATP.

This sequence belongs to the UMP kinase family. As to quaternary structure, homohexamer.

It is found in the cytoplasm. It carries out the reaction UMP + ATP = UDP + ADP. It participates in pyrimidine metabolism; CTP biosynthesis via de novo pathway; UDP from UMP (UMPK route): step 1/1. Its activity is regulated as follows. Inhibited by UTP. In terms of biological role, catalyzes the reversible phosphorylation of UMP to UDP. The chain is Uridylate kinase from Methanocorpusculum labreanum (strain ATCC 43576 / DSM 4855 / Z).